The sequence spans 588 residues: Catechol oxidase B, chloroplastic (588 aa).

A chloroplast-targeting transit peptide spans 1–88 (SSSSTTTIPL…AANLAPLASA (88 aa)). Disulfide bonds link Cys-99–Cys-115 and Cys-114–Cys-181. Residues His-180, His-198, His-207, His-329, His-333, and His-364 each coordinate Cu cation. The 2'-(S-cysteinyl)-histidine (Cys-His) cross-link spans 184–198 (CNGAYKVGGKELQVH).

Belongs to the tyrosinase family. It depends on Cu(2+) as a cofactor.

It localises to the plastid. It is found in the chloroplast thylakoid lumen. The enzyme catalyses 2 catechol + O2 = 2 1,2-benzoquinone + 2 H2O. In terms of biological role, catalyzes the oxidation of mono- and o-diphenols to o-diquinones. The protein is Catechol oxidase B, chloroplastic of Solanum tuberosum (Potato).